Consider the following 212-residue polypeptide: External core antigen (212 aa).

The N-terminal stretch at 1–19 (MQLFHLCLIISCSCPTVQA) is a signal peptide. The interval 25–27 (GWL) is HBEAG. The interval 165-212 (NAPILSTLPETTVVRRRGRSPRRRTPSPRRRRSQSPRRRRSQSPASQC) is disordered. A compositionally biased stretch (basic residues) spans 178 to 205 (VRRRGRSPRRRTPSPRRRRSQSPRRRRS). The 1; half-length repeat unit spans residues 184–190 (SPRRRTP). The segment at 184 to 206 (SPRRRTPSPRRRRSQSPRRRRSQ) is 3 X 8 AA repeats of S-P-R-R-R-R-S-Q. Residues 184 to 212 (SPRRRTPSPRRRRSQSPRRRRSQSPASQC) constitute a propeptide that is removed on maturation. Repeat copies occupy residues 191–198 (SPRRRRSQ) and 199–206 (SPRRRRSQ).

This sequence belongs to the orthohepadnavirus precore antigen family. In terms of assembly, homodimerizes. In terms of processing, phosphorylated. Cleaved by host furin.

It localises to the secreted. Its subcellular location is the host nucleus. Functionally, may regulate immune response to the intracellular capsid in acting as a T-cell tolerogen, by having an immunoregulatory effect which prevents destruction of infected cells by cytotoxic T-cells. This immune regulation may predispose to chronicity during perinatal infections and prevent severe liver injury during adult infections. The chain is External core antigen from Gibbon hepatitis B virus subtype ayw3q (isolate Hope) (HBVgbn).